The chain runs to 714 residues: Protein HAPLESS 2-B (714 aa).

The first 33 residues, 1 to 33, serve as a signal peptide directing secretion; it reads MAPRRRRRAARSSRPLLLALLAAAVNNFAPAGG. At 34–552 the chain is on the extracellular side; the sequence is VEVLAKSRLE…FFTGTTCSTR (519 aa). Disulfide bonds link Cys45–Cys59, Cys134–Cys164, Cys146–Cys194, Cys165–Cys321, Cys167–Cys177, Cys304–Cys328, and Cys441–Cys479. Residues 553–573 traverse the membrane as a helical segment; the sequence is CWSFLKFVIHGLLLVAVLWLL. The Cytoplasmic portion of the chain corresponds to 574–714; it reads HRKGLFDPLY…HGDRRHHAWH (141 aa). Positions 597-619 are disordered; the sequence is RARRRHKRAHSHRHSHHHDAHKR. Positions 598-619 are enriched in basic residues; that stretch reads ARRRHKRAHSHRHSHHHDAHKR.

The protein belongs to the HAP2/GCS1 family.

The protein localises to the endoplasmic reticulum membrane. It is found in the cell membrane. Required for male fertility. Plays a role in pollen tube guidance and successful gamete attachment. Essential for the fusion of gametes during double fertilization, where one male gamete fuses with the egg to produce a zygote, and another male gamete fuses with the central cell to produce the endosperm. Mediates the fusion of cell membranes. Not required for pollen tube outgrowth. This is Protein HAPLESS 2-B (HAP2B) from Oryza sativa subsp. japonica (Rice).